The sequence spans 109 residues: Large ribosomal subunit protein uL24 (109 aa).

The protein belongs to the universal ribosomal protein uL24 family. As to quaternary structure, part of the 50S ribosomal subunit.

One of two assembly initiator proteins, it binds directly to the 5'-end of the 23S rRNA, where it nucleates assembly of the 50S subunit. Functionally, one of the proteins that surrounds the polypeptide exit tunnel on the outside of the subunit. This Legionella pneumophila (strain Corby) protein is Large ribosomal subunit protein uL24.